Reading from the N-terminus, the 43-residue chain is Potassium channel toxin gamma-KTx 4.7 (43 aa).

4 disulfides stabilise this stretch: C5-C23, C11-C34, C20-C39, and C24-C41.

It belongs to the ergtoxin family. Gamma-KTx 4 subfamily. In terms of tissue distribution, expressed by the venom gland.

Its subcellular location is the secreted. Functionally, reversibly blocks Kv11/ERG potassium channels. This is Potassium channel toxin gamma-KTx 4.7 from Centruroides limpidus (Mexican scorpion).